Here is a 512-residue protein sequence, read N- to C-terminus: Maturase K (512 aa).

The protein belongs to the intron maturase 2 family. MatK subfamily.

Its subcellular location is the plastid. The protein resides in the chloroplast. Usually encoded in the trnK tRNA gene intron. Probably assists in splicing its own and other chloroplast group II introns. This Oenothera glazioviana (Large-flowered evening primrose) protein is Maturase K.